The following is a 273-amino-acid chain: Kit ligand (273 aa).

The first 25 residues, Met1 to Thr25, serve as a signal peptide directing secretion. The Extracellular segment spans residues Glu26–His214. Cystine bridges form between Cys29/Cys114 and Cys68/Cys163. 2 N-linked (GlcNAc...) asparagine; partial glycosylation sites follow: Asn90 and Asn118. N-linked (GlcNAc...) asparagine glycosylation occurs at Asn145. The O-linked (GalNAc...) serine glycan is linked to Ser167. Residues Thr168 and Thr180 are each glycosylated (O-linked (GalNAc...) threonine). The N-linked (GlcNAc...) asparagine glycan is linked to Asn195. A helical transmembrane segment spans residues Trp215–Trp237. The Cytoplasmic segment spans residues Lys238 to Val273.

It belongs to the SCF family. Homodimer, non-covalently linked. Heterotetramer with KIT, binding two KIT molecules; thereby mediates KIT dimerization and subsequent activation by autophosphorylation. Post-translationally, a soluble form (sKITLG) is produced by proteolytic processing of isoform 1 in the extracellular domain. Found in two differentially glycosylated forms, LMW-SCF and HMW-SCF. LMW-SCF is fully N-glycosylated at Asn-145, partially N-glycosylated at Asn-90, O-glycosylated at Ser-167, Thr-168 and Thr-180, and not glycosylated at Asn-97 or Asn-118. HMW-SCF is N-glycosylated at Asn-118, Asn-90 and Asn-145, O-glycosylated at Ser-167, Thr-168 and Thr-180, and not glycosylated at Asn-97. In terms of processing, a soluble form exists as a cleavage product of the extracellular domain.

Its subcellular location is the cell membrane. It is found in the cytoplasm. The protein localises to the cytoskeleton. It localises to the cell projection. The protein resides in the lamellipodium. Its subcellular location is the filopodium. It is found in the secreted. In terms of biological role, ligand for the receptor-type protein-tyrosine kinase KIT. Plays an essential role in the regulation of cell survival and proliferation, hematopoiesis, stem cell maintenance, gametogenesis, mast cell development, migration and function, and in melanogenesis. KITLG/SCF binding can activate several signaling pathways. Promotes phosphorylation of PIK3R1, the regulatory subunit of phosphatidylinositol 3-kinase, and subsequent activation of the kinase AKT1. KITLG/SCF and KIT also transmit signals via GRB2 and activation of RAS, RAF1 and the MAP kinases MAPK1/ERK2 and/or MAPK3/ERK1. KITLG/SCF and KIT promote activation of STAT family members STAT1, STAT3 and STAT5. KITLG/SCF and KIT promote activation of PLCG1, leading to the production of the cellular signaling molecules diacylglycerol and inositol 1,4,5-trisphosphate. KITLG/SCF acts synergistically with other cytokines, probably interleukins. This is Kit ligand from Homo sapiens (Human).